Consider the following 323-residue polypeptide: Ankyrin repeat and SOCS box protein 11 (323 aa).

6 ANK repeats span residues 64–93 (ADRS…NVNL), 97–126 (NRVS…HVNG), 130–159 (HGAT…KAQL), 162–191 (HLAS…NIDH), 195–224 (QLGT…SVDH), and 227–256 (WLDT…NLKR). The SOCS box domain occupies 273-323 (SVEQALLLREGPPALSQLCRLCVRKCLGRACHQAIHKLHLPEPLERFLLYQ).

The protein belongs to the ankyrin SOCS box (ASB) family. As to quaternary structure, substrate-recognition component of the ECS(ASB11) complex, composed of ASB11, CUL5, ELOB, ELOC and RNF7/RBX2.

It localises to the endoplasmic reticulum. It functions in the pathway protein modification; protein ubiquitination. Substrate-recognition component of a cullin-5-RING E3 ubiquitin-protein ligase complex (ECS complex, also named CRL5 complex), which mediates the ubiquitination and subsequent proteasomal degradation of target proteins, such as BIK, DIRAS2 and RPN1. The ECS(ASB11) complex acts as a regulator of the endoplasmic reticulum unfolded protein response by mediating ubiquitination and degradation of BIK. This is Ankyrin repeat and SOCS box protein 11 from Homo sapiens (Human).